A 710-amino-acid polypeptide reads, in one-letter code: Ephexin-1 (710 aa).

The segment covering 1-20 (METKNSEDWGKPQRKSESSS) has biased composition (basic and acidic residues). Positions 1 to 146 (METKNSEDWG…TPEECPALTD (146 aa)) are disordered. The tract at residues 1 to 272 (METKNSEDWG…VLDILQPEEI (272 aa)) is regulatory region; modulates activity toward RHOA, RAC1 and CDC42. A compositionally biased stretch (polar residues) spans 123-137 (QEASESSSTPGNGTT). Tyr-177 carries the phosphotyrosine modification. The segment at 192–234 (RRQQDAEIQGNSDGSQVGEDAGEEEEEEEEGEEEELASPPERR) is disordered. Residues 211–227 (DAGEEEEEEEEGEEEEL) show a composition bias toward acidic residues. A DH domain is found at 273 to 457 (RLQEAMFELV…EMVVKACNEG (185 aa)). The region spanning 489 to 601 (WLLKQGELQQ…WMTSLAPNRR (113 aa)) is the PH domain. The region spanning 612–673 (LDCPQVQCVH…PSSMTEEILN (62 aa)) is the SH3 domain. Over residues 688–699 (HKMEDPQRSQNK) the composition is skewed to basic and acidic residues. The segment at 688–710 (HKMEDPQRSQNKDRRKLGSRNRQ) is disordered. Over residues 700–710 (DRRKLGSRNRQ) the composition is skewed to basic residues.

Interacts with CDK5R1 and EPHA4; activated by EPHA4 through the CDK5 kinase. In terms of processing, src-dependent phosphorylation at Tyr-177 upon EPHA4 activation increases the guanine exchange factor activity toward RHOA. Phosphorylation by CDK5 upon EPHA4 activation by EFNA1 may regulate dendritic spine morphogenesis. In terms of tissue distribution, highly expressed in brain and to a lower extent in eye.

The protein localises to the cytoplasm. The protein resides in the membrane. It is found in the cell projection. Its subcellular location is the growth cone. Functionally, acts as a guanine nucleotide exchange factor (GEF) which differentially activates the GTPases RHOA, RAC1 and CDC42. Plays a role in axon guidance regulating ephrin-induced growth cone collapse and dendritic spine morphogenesis. Upon activation by ephrin through EPHA4, the GEF activity switches toward RHOA resulting in its activation. Activated RHOA promotes cone retraction at the expense of RAC1- and CDC42-stimulated growth cone extension. The sequence is that of Ephexin-1 (Ngef) from Mus musculus (Mouse).